A 147-amino-acid polypeptide reads, in one-letter code: UPF0735 ACT domain-containing protein YszB (147 aa).

The region spanning 70–145 (TLFFHLEDRS…FVEKVEILGS (76 aa)) is the ACT domain.

The protein belongs to the UPF0735 family.

The sequence is that of UPF0735 ACT domain-containing protein YszB (yszB) from Bacillus subtilis (strain 168).